Here is a 346-residue protein sequence, read N- to C-terminus: UDP-N-acetylenolpyruvoylglucosamine reductase (346 aa).

Residues 18–189 enclose the FAD-binding PCMH-type domain; that stretch reads LRAQARAFIA…VSVVFALKTH (172 aa). Arginine 165 is a catalytic residue. Serine 240 (proton donor) is an active-site residue. The active site involves glutamate 336.

It belongs to the MurB family. Requires FAD as cofactor.

The protein resides in the cytoplasm. It catalyses the reaction UDP-N-acetyl-alpha-D-muramate + NADP(+) = UDP-N-acetyl-3-O-(1-carboxyvinyl)-alpha-D-glucosamine + NADPH + H(+). The protein operates within cell wall biogenesis; peptidoglycan biosynthesis. Cell wall formation. The chain is UDP-N-acetylenolpyruvoylglucosamine reductase from Neisseria meningitidis serogroup B (strain ATCC BAA-335 / MC58).